A 151-amino-acid polypeptide reads, in one-letter code: Group 10 secretory phospholipase A2 (151 aa).

The N-terminal stretch at 1–17 is a signal peptide; the sequence is MLLLLLLLLLGPGSCLS. Positions 18-28 are excised as a propeptide; it reads EATRRSHVYKR. 8 cysteine pairs are disulfide-bonded: Cys39–Cys97, Cys53–Cys143, Cys55–Cys71, Cys70–Cys125, Cys76–Cys150, Cys77–Cys118, Cys86–Cys111, and Cys104–Cys116. The Ca(2+) site is built by Tyr54, Gly56, and Gly58. His74 is an active-site residue. Asp75 serves as a coordination point for Ca(2+). Asp119 is a catalytic residue.

It belongs to the phospholipase A2 family. In terms of assembly, interacts with PLA2R1; this interaction mediates PLA2G10 clearance and inactivation. It depends on Ca(2+) as a cofactor.

Its subcellular location is the secreted. The protein resides in the lysosome. The protein localises to the cytoplasmic vesicle. It localises to the secretory vesicle. It is found in the acrosome. It carries out the reaction a 1,2-diacyl-sn-glycero-3-phosphocholine + H2O = a 1-acyl-sn-glycero-3-phosphocholine + a fatty acid + H(+). The catalysed reaction is 1-hexadecanoyl-2-(9Z-octadecenoyl)-sn-glycero-3-phosphocholine + H2O = 1-hexadecanoyl-sn-glycero-3-phosphocholine + (9Z)-octadecenoate + H(+). The enzyme catalyses 1-octadecanoyl-2-(5Z,8Z,11Z,14Z-eicosatetraenoyl)-sn-glycero-3-phosphocholine + H2O = 1-octadecanoyl-sn-glycero-3-phosphocholine + (5Z,8Z,11Z,14Z)-eicosatetraenoate + H(+). It catalyses the reaction 1,2-dihexadecanoyl-sn-glycero-3-phosphocholine + H2O = 1-hexadecanoyl-sn-glycero-3-phosphocholine + hexadecanoate + H(+). It carries out the reaction 1-hexadecanoyl-2-(9Z-octadecenoyl)-sn-glycero-3-phosphoglycerol + H2O = 1-hexadecanoyl-sn-glycero-3-phosphoglycerol + (9Z)-octadecenoate + H(+). The catalysed reaction is 1,2-dihexadecanoyl-sn-glycero-3-phospho-(1'-sn-glycerol) + H2O = 1-hexadecanoyl-sn-glycero-3-phospho-(1'-sn-glycerol) + hexadecanoate + H(+). The enzyme catalyses 1-hexadecanoyl-2-(9Z-octadecenoyl)-sn-glycero-3-phospho-L-serine + H2O = 1-hexadecanoyl-sn-glycero-3-phospho-L-serine + (9Z)-octadecenoate + H(+). It catalyses the reaction 1-hexadecanoyl-2-(9Z,12Z-octadecadienoyl)-sn-glycero-3-phosphoethanolamine + H2O = 1-hexadecanoyl-sn-glycero-3-phosphoethanolamine + (9Z,12Z)-octadecadienoate + H(+). It carries out the reaction 1-hexadecanoyl-2-(9Z-octadecenoyl)-sn-glycero-3-phosphate + H2O = 1-hexadecanoyl-sn-glycero-3-phosphate + (9Z)-octadecenoate + H(+). The catalysed reaction is 1-O-hexadecyl-2-acetyl-sn-glycero-3-phosphocholine + H2O = 1-O-hexadecyl-sn-glycero-3-phosphocholine + acetate + H(+). Its function is as follows. Secretory calcium-dependent phospholipase A2 that primarily targets extracellular phospholipids. Hydrolyzes the ester bond of the fatty acyl group attached at sn-2 position of phospholipids with preference for phosphatidylcholines and phosphatidylglycerols over phosphatidylethanolamines. Preferentially releases sn-2 omega-6 and omega-3 polyunsaturated fatty acyl (PUFA) chains over saturated fatty acyls. Contributes to phospholipid remodeling of very low-density lipoprotein (VLDL), low-density lipoprotein (LDL) and high-density lipoprotein (HDL) particles. Hydrolyzes LDL phospholipids releasing unsaturated fatty acids that regulate macrophage differentiation toward foam cells. Efficiently hydrolyzes and inactivates platelet activating factor (PAF), a potent lipid mediator present in oxidized LDL. May act in an autocrine and paracrine manner. Secreted by lung epithelium, targets membrane phospholipids of infiltrating eosinophils, releasing arachidonate and boosting eicosanoid and cysteinyl leukotriene synthesis involved in airway inflammatory response. Secreted by gut epithelium, hydrolyzes dietary and biliary phosphatidylcholines in the gastrointestinal lumen. Plays a stem cell regulator role in colon epithelium. Within intracellular compartment, mediates Paneth-like cell differentiation and its stem cell supporting functions by inhibiting the Wnt signaling pathway in intestinal stem cell (ISC). Secreted in the intestinal lumen upon inflammation, acts in an autocrine way and promotes prostaglandin E2 synthesis that stimulates Wnt signaling pathway in ISCs and tissue regeneration. May participate in hair follicle morphogenesis by regulating phosphatidylethanolamines metabolism at the outermost epithelial layer and facilitating melanin synthesis. By releasing lysophosphatidylcholines (LPCs) at sperm acrosome, controls sperm cell capacitation, acrosome reaction and overall fertility. May promote neurite outgrowth in neuron fibers involved in nociception. Contributes to lipid remodeling of cellular membranes and generation of lipid mediators involved in pathogen clearance. Cleaves sn-2 fatty acyl chains of phosphatidylglycerols and phosphatidylethanolamines, which are major components of membrane phospholipids in bacteria. Displays bactericidal activity against Gram-positive bacteria by directly hydrolyzing phospholipids of the bacterial membrane. In pulmonary epithelium, may contribute to host defense response against adenoviral infection. Prevents adenovirus entry into host cells by hydrolyzing host cell plasma membrane, releasing C16:0 LPCs that inhibit virus-mediated membrane fusion and viral infection. Likely prevents adenoviral entry into the endosomes of host cells. May play a role in maturation and activation of innate immune cells including macrophages, group 2 innate lymphoid cells and mast cells. This chain is Group 10 secretory phospholipase A2 (Pla2g10), found in Rattus norvegicus (Rat).